We begin with the raw amino-acid sequence, 688 residues long: Homoaconitase, mitochondrial (688 aa).

The [4Fe-4S] cluster site is built by Cys335, Cys395, and Cys398. The disordered stretch occupies residues 468–494 (SIDLPKSSGNTGATSEEPISEDDTSEA).

It belongs to the aconitase/IPM isomerase family. [4Fe-4S] cluster is required as a cofactor.

The protein resides in the mitochondrion. It catalyses the reaction (2R,3S)-homoisocitrate = cis-homoaconitate + H2O. The protein operates within amino-acid biosynthesis; L-lysine biosynthesis via AAA pathway; L-alpha-aminoadipate from 2-oxoglutarate: step 3/5. In terms of biological role, catalyzes the reversible hydration of cis-homoaconitate to (2R,3S)-homoisocitrate, a step in the alpha-aminoadipate pathway for lysine biosynthesis. The polypeptide is Homoaconitase, mitochondrial (LYS4) (Candida parapsilosis (Yeast)).